Here is a 76-residue protein sequence, read N- to C-terminus: MKAGIHPAYVDTTVVCGCGNTFQTRSTKESGHITVEVCSQCHPFYTGKQKILDTGGRVARFEARYGKRAGKKADAK.

The Zn(2+) site is built by cysteine 16, cysteine 18, cysteine 38, and cysteine 41.

It belongs to the bacterial ribosomal protein bL31 family. Type A subfamily. Part of the 50S ribosomal subunit. Zn(2+) is required as a cofactor.

Its function is as follows. Binds the 23S rRNA. This chain is Large ribosomal subunit protein bL31, found in Nocardia farcinica (strain IFM 10152).